A 795-amino-acid chain; its full sequence is Protein translocase subunit SecA 2 (795 aa).

Residues Q84, 102–106, and D496 each bind ATP; that span reads GEGKT.

Belongs to the SecA family. Monomer and homodimer. Part of the essential Sec protein translocation apparatus which comprises SecA, SecYEG and auxiliary proteins SecDF. Other proteins may also be involved.

Its subcellular location is the cell membrane. It is found in the cytoplasm. The enzyme catalyses ATP + H2O + cellular proteinSide 1 = ADP + phosphate + cellular proteinSide 2.. Functionally, part of the Sec protein translocase complex. Interacts with the SecYEG preprotein conducting channel. Has a central role in coupling the hydrolysis of ATP to the transfer of proteins into and across the cell membrane, serving as an ATP-driven molecular motor driving the stepwise translocation of polypeptide chains across the membrane. In Streptococcus agalactiae serotype V (strain ATCC BAA-611 / 2603 V/R), this protein is Protein translocase subunit SecA 2.